The sequence spans 210 residues: Phosphoribosyl-dephospho-CoA transferase (210 aa).

Residues D135 and D137 contribute to the active site.

Belongs to the MdcG family.

It carries out the reaction apo-[malonate decarboxylase ACP] + 2'-(5''-triphospho-alpha-D-ribosyl)-3'-dephospho-CoA = holo-[malonate decarboxylase ACP] + diphosphate. Its function is as follows. Transfers 2'-(5-triphosphoribosyl)-3'-dephosphocoenzyme-A to the apo-[acyl-carrier-protein] of the malonate decarboxylase to yield holo-[acyl-carrier-protein]. The protein is Phosphoribosyl-dephospho-CoA transferase of Pseudomonas aeruginosa (strain ATCC 15692 / DSM 22644 / CIP 104116 / JCM 14847 / LMG 12228 / 1C / PRS 101 / PAO1).